We begin with the raw amino-acid sequence, 338 residues long: Delta(9)-fatty-acid desaturase fat-7 (338 aa).

Transmembrane regions (helical) follow at residues Val51–His71, Thr76–His96, Tyr194–Trp214, and Ala218–Trp238.

Belongs to the fatty acid desaturase type 1 family. In terms of tissue distribution, expressed in the intestine in adult worms and in all four larval stages.

It is found in the membrane. The catalysed reaction is octadecanoyl-CoA + 2 Fe(II)-[cytochrome b5] + O2 + 2 H(+) = (9Z)-octadecenoyl-CoA + 2 Fe(III)-[cytochrome b5] + 2 H2O. It catalyses the reaction hexadecanoyl-CoA + 2 Fe(II)-[cytochrome b5] + O2 + 2 H(+) = (9Z)-hexadecenoyl-CoA + 2 Fe(III)-[cytochrome b5] + 2 H2O. The enzyme catalyses heptadecanoyl-CoA + 2 Fe(II)-[cytochrome b5] + O2 + 2 H(+) = (9Z)-heptadecenoyl-CoA + 2 Fe(III)-[cytochrome b5] + 2 H2O. It carries out the reaction (11E)-octadecenoyl-CoA + 2 Fe(II)-[cytochrome b5] + O2 + 2 H(+) = (9Z,11E)-octadecadienoyl-CoA + 2 Fe(III)-[cytochrome b5] + 2 H2O. It participates in lipid metabolism; monounsaturated fatty acid biosynthesis. Its pathway is lipid metabolism; fatty acid metabolism. Its function is as follows. Delta(9)-fatty acid desaturase that acts preferentially on stearoyl-CoA (octadecanoyl-CoA) producing the monounsaturated oleoyl-CoA ((9Z)-octadecenoyl-CoA), one of the most abundant monounsaturated fatty acid in Caenorhabditis elegans phospholipids and triacylglycerols. Also acts on palmitoyl-CoA (hexadecanoyl-CoA), heptadecanoyl-CoA and (11E)-octadecenoyl-CoA (trans-vaccenoyl-CoA), the monounsaturated fatty acids (MUFAs) produced are further used by several other desaturases and elongases as substrates to synthesize polyunsaturated fatty acids (PUFAs) endogenously (PUFAs are essential for membrane structure and many cellular and physiological processes). Unlike plants, Caenorhabditis elegans desaturases seem to use fatty acyl-CoAs as substrates. Partially inhibits expression of genes involved in beta-oxidation, such as ech-1 and acs-2, perhaps signaling via the actions of one of its fatty acid products. May form part of a negative feedback loop with the transcription factor nhr-49 to limit beta-oxidation, in which nhr-49 stimulates expression of fat-7 and acs-2, and in turn fat-7 indirectly inhibits acs-2 and other genes also involved in beta-oxidation. The polypeptide is Delta(9)-fatty-acid desaturase fat-7 (fat-7) (Caenorhabditis elegans).